The chain runs to 326 residues: Protein-ribulosamine 3-kinase, chloroplastic (326 aa).

Residues 1–30 (MAVASLSICFSARPHLLLRNFSPRPKFVAM) constitute a chloroplast transit peptide. 125–127 (EFI) contributes to the ATP binding site. Aspartate 230 functions as the Proton acceptor in the catalytic mechanism.

The protein belongs to the fructosamine kinase family.

It is found in the plastid. The protein localises to the chloroplast. The enzyme catalyses N(6)-D-ribulosyl-L-lysyl-[protein] + ATP = N(6)-(3-O-phospho-D-ribulosyl)-L-lysyl-[protein] + ADP + H(+). The catalysed reaction is N(6)-(D-erythrulosyl)-L-lysyl-[protein] + ATP = N(6)-(3-O-phospho-D-erythrulosyl)-L-lysyl-[protein] + ADP + H(+). Its function is as follows. Initiates a process leading to the deglycation of proteins. Phosphorylates low-molecular-mass and protein-bound erythrulosamines and ribulosamines, but not fructosamines or psicosamines, on the third carbon of the sugar moiety. Protein-bound erythrulosamine 3-phosphates and ribulosamine 3-phosphates are unstable and decompose under physiological conditions. The chain is Protein-ribulosamine 3-kinase, chloroplastic from Arabidopsis thaliana (Mouse-ear cress).